The primary structure comprises 335 residues: Phospho-N-acetylmuramoyl-pentapeptide-transferase (335 aa).

10 consecutive transmembrane segments (helical) span residues 3–23 (LTIL…PHFI), 53–73 (GGTV…LVYF), 78–98 (SLGL…IGFL), 118–138 (FTFQ…PSGI), 143–163 (VFGY…FWVV), 174–194 (GIDG…GVIA), 200–220 (FDVL…FLFN), 226–246 (IFMG…ISIA), 251–271 (WTLL…MLQV), and 314–334 (VDAF…AILY).

This sequence belongs to the glycosyltransferase 4 family. MraY subfamily. The cofactor is Mg(2+).

Its subcellular location is the cell membrane. The enzyme catalyses UDP-N-acetyl-alpha-D-muramoyl-L-alanyl-gamma-D-glutamyl-L-lysyl-D-alanyl-D-alanine + di-trans,octa-cis-undecaprenyl phosphate = Mur2Ac(oyl-L-Ala-gamma-D-Glu-L-Lys-D-Ala-D-Ala)-di-trans,octa-cis-undecaprenyl diphosphate + UMP. The protein operates within cell wall biogenesis; peptidoglycan biosynthesis. Functionally, catalyzes the initial step of the lipid cycle reactions in the biosynthesis of the cell wall peptidoglycan: transfers peptidoglycan precursor phospho-MurNAc-pentapeptide from UDP-MurNAc-pentapeptide onto the lipid carrier undecaprenyl phosphate, yielding undecaprenyl-pyrophosphoryl-MurNAc-pentapeptide, known as lipid I. This chain is Phospho-N-acetylmuramoyl-pentapeptide-transferase, found in Streptococcus equi subsp. equi (strain 4047).